Consider the following 205-residue polypeptide: Small ribosomal subunit protein uS4 (205 aa).

The span at Met-1–Asp-12 shows a compositional bias: basic residues. Residues Met-1–Gly-49 are disordered. The 63-residue stretch at Arg-94–Ala-156 folds into the S4 RNA-binding domain.

The protein belongs to the universal ribosomal protein uS4 family. As to quaternary structure, part of the 30S ribosomal subunit. Contacts protein S5. The interaction surface between S4 and S5 is involved in control of translational fidelity.

One of the primary rRNA binding proteins, it binds directly to 16S rRNA where it nucleates assembly of the body of the 30S subunit. Its function is as follows. With S5 and S12 plays an important role in translational accuracy. This Methylobacterium nodulans (strain LMG 21967 / CNCM I-2342 / ORS 2060) protein is Small ribosomal subunit protein uS4.